Here is a 579-residue protein sequence, read N- to C-terminus: Adenine deaminase (579 aa).

It belongs to the metallo-dependent hydrolases superfamily. Adenine deaminase family. The cofactor is Mn(2+).

The enzyme catalyses adenine + H2O + H(+) = hypoxanthine + NH4(+). This is Adenine deaminase from Listeria welshimeri serovar 6b (strain ATCC 35897 / DSM 20650 / CCUG 15529 / CIP 8149 / NCTC 11857 / SLCC 5334 / V8).